The following is a 1055-amino-acid chain: RapA guanosine triphosphatase-activating protein 1 (1055 aa).

6 disordered regions span residues 76–100 (LSPQ…EEER), 256–292 (NHQP…SSLT), 418–525 (QQLL…FLGV), 544–570 (THAT…SPPL), 603–629 (TTQL…PPSE), and 943–969 (NNNS…NLPT). Positions 89–100 (QHEKITPEEEER) are enriched in basic and acidic residues. 3 stretches are compositionally biased toward low complexity: residues 262–292 (STPR…SSLT), 442–455 (DFNL…NNNN), and 469–482 (TTTT…NNNN). Residues 483 to 494 (ISPQHSGTSGSP) show a composition bias toward polar residues. Low complexity-rich tracts occupy residues 603–622 (TTQL…TSQP) and 943–966 (NNNS…SDSN). A Rap-GAP domain is found at 779–1048 (LIQFEAKNIH…RTRKEFLHSF (270 aa)).

Its subcellular location is the cytoplasm. It localises to the cell cortex. Mediates the deactivation of rap1 and plays an important role in spatially and temporally regulating cell adhesion and chemotaxis by controlling attachment disassembly in the leading edge through the regulation of myosin II assembly and disassembly. Overexpression leads to defective chemotaxis. This is RapA guanosine triphosphatase-activating protein 1 (rapgap1) from Dictyostelium discoideum (Social amoeba).